Here is a 460-residue protein sequence, read N- to C-terminus: Elongation factor 1-alpha (460 aa).

Residue Gly-2 is modified to N,N,N-trimethylglycine. Lys-3 is modified (N6,N6-dimethyllysine; alternate). Lys-3 carries the post-translational modification N6-methyllysine; alternate. The tr-type G domain occupies 6-241; it reads KTHINLVVIG…DAIDPPTRPT (236 aa). Residues 15-22 form a G1 region; that stretch reads GHVDSGKS. 15–22 contributes to the GTP binding site; it reads GHVDSGKS. Position 31 is an N6-methyllysine (Lys-31). A G2 region spans residues 71 to 75; it reads GITID. Position 80 is an N6,N6,N6-trimethyllysine (Lys-80). The segment at 92–95 is G3; it reads DAPG. Residues 92–96 and 154–157 each bind GTP; these read DAPGH and NKMD. Residues 154-157 are G4; the sequence is NKMD. The interval 193-195 is G5; sequence SGF. Lys-317 is subject to N6,N6-dimethyllysine; alternate. The residue at position 317 (Lys-317) is an N6-methyllysine; alternate. At Lys-391 the chain carries N6-methyllysine.

It belongs to the TRAFAC class translation factor GTPase superfamily. Classic translation factor GTPase family. EF-Tu/EF-1A subfamily.

The protein localises to the cytoplasm. This protein promotes the GTP-dependent binding of aminoacyl-tRNA to the A-site of ribosomes during protein biosynthesis. The chain is Elongation factor 1-alpha (TEF) from Coccidioides immitis (strain RS) (Valley fever fungus).